Here is a 335-residue protein sequence, read N- to C-terminus: MNKTNKISIIGSGAMATAMAKVLYDSGNTNIFIYGIDEKELEDLKIGKNAKYFSTDIKLPSFNTTKDLKIALDKTDYIVLAIPSIFIQATFLEILKLLNSKVLVISVSKGFYPNSFLSIHEGLSKDSKSNEFVRGVVTVTGPSFAEEIIKEQLTTICAVDSNIKNAQEVQKLFSNKYFKLYVQSDVIGAEVGASFKNVLAIFSGIANQQGYGINTLASILSRGLKEMKLYNDKVGGKLSTLLGLTGVGDLILTATSPLSRNFSFGKEFVINKSKALETVKTVEGLKALENIYRSNKKYGLDLPIISSLYELIFENISLEEFKEKIWNRTLKSEFE.

Lys109 lines the NADPH pocket. Residues Lys109, Gly141, and Ser143 each coordinate sn-glycerol 3-phosphate. Residue Ala145 coordinates NADPH. Sn-glycerol 3-phosphate-binding residues include Lys196, Asp249, Ser259, Arg260, and Asn261. Catalysis depends on Lys196, which acts as the Proton acceptor. Arg260 serves as a coordination point for NADPH. Glu283 contacts NADPH.

This sequence belongs to the NAD-dependent glycerol-3-phosphate dehydrogenase family.

Its subcellular location is the cytoplasm. It catalyses the reaction sn-glycerol 3-phosphate + NAD(+) = dihydroxyacetone phosphate + NADH + H(+). The catalysed reaction is sn-glycerol 3-phosphate + NADP(+) = dihydroxyacetone phosphate + NADPH + H(+). It functions in the pathway membrane lipid metabolism; glycerophospholipid metabolism. In terms of biological role, catalyzes the reduction of the glycolytic intermediate dihydroxyacetone phosphate (DHAP) to sn-glycerol 3-phosphate (G3P), the key precursor for phospholipid synthesis. This Mycoplasma mobile (strain ATCC 43663 / 163K / NCTC 11711) (Mesomycoplasma mobile) protein is Glycerol-3-phosphate dehydrogenase [NAD(P)+].